The chain runs to 482 residues: Malvidin galactosylase UGT88C3 (482 aa).

Histidine 16 serves as the catalytic Proton acceptor. Aspartate 117 serves as the catalytic Charge relay. Residues serine 279, tryptophan 345, alanine 349, histidine 366, asparagine 370, serine 371, and glutamate 374 each coordinate UDP.

It belongs to the UDP-glycosyltransferase family. In terms of tissue distribution, highly expressed in leaves, sheaths, pistils and embryos, observed in stems, stem nodes and panicles, and present at low levels in roots.

The protein localises to the endoplasmic reticulum. It localises to the nucleus. It catalyses the reaction malvidin + UDP-alpha-D-galactose = malvidin 3-O-beta-D-galactoside + UDP + H(+). It participates in pigment biosynthesis; anthocyanin biosynthesis. In terms of biological role, UDP-glycosyltransferase which uses UDP-galactose and malvidin as substrates to catalyze the biosynthesis of malvidin 3-O-galactoside, an anthocyanin conferring purple pigmentation. The polypeptide is Malvidin galactosylase UGT88C3 (Oryza sativa subsp. japonica (Rice)).